A 166-amino-acid polypeptide reads, in one-letter code: Cytochrome c-550 2 (166 aa).

The N-terminal stretch at 1–32 is a signal peptide; that stretch reads MFSRQFGRLATLALALAVAGCAGGEQSTTAEA. Cys71, Cys74, and His75 together coordinate heme c.

This sequence belongs to the cytochrome c family. PsbV subfamily. The cofactor is heme c.

It is found in the cell inner membrane. Probable low-potential cytochrome c, might function in photosystem II (PSII). This Gloeobacter violaceus (strain ATCC 29082 / PCC 7421) protein is Cytochrome c-550 2 (psbV2).